The following is a 493-amino-acid chain: Intermediate cleaving peptidase 55, mitochondrial (493 aa).

A mitochondrion-targeting transit peptide spans 1 to 19 (MQFLARNLVRRVSRTQVVS). Positions 296, 307, 383, 410, and 433 each coordinate Mn(2+).

It belongs to the peptidase M24B family. It depends on Mn(2+) as a cofactor.

It is found in the mitochondrion. The protein localises to the nucleus. In terms of biological role, aminopeptidase which cleaves preprotein intermediates that carry destabilizing N-ter amino acid residues after the mitochondrial processing peptidase (MPP) cleavage site and is thus critical for stabilization of the mitochondrial proteome. The chain is Intermediate cleaving peptidase 55, mitochondrial from Arabidopsis thaliana (Mouse-ear cress).